Reading from the N-terminus, the 261-residue chain is Zinc import ATP-binding protein ZnuC (261 aa).

One can recognise an ABC transporter domain in the interval 6–221 (IRLEKVAVRF…PAFVELFGNN (216 aa)). Residue 38-45 (GPNGAGKT) participates in ATP binding.

This sequence belongs to the ABC transporter superfamily. Zinc importer (TC 3.A.1.15.5) family. The complex is composed of two ATP-binding proteins (ZnuC), two transmembrane proteins (ZnuB) and a solute-binding protein (ZnuA).

The protein localises to the cell inner membrane. The catalysed reaction is Zn(2+)(out) + ATP(in) + H2O(in) = Zn(2+)(in) + ADP(in) + phosphate(in) + H(+)(in). Functionally, part of the ABC transporter complex ZnuABC involved in zinc import. Responsible for energy coupling to the transport system. This chain is Zinc import ATP-binding protein ZnuC, found in Pseudomonas fluorescens (strain Pf0-1).